The primary structure comprises 489 residues: Ataxin-10 homolog (489 aa).

Belongs to the ataxin-10 family.

It localises to the cytoplasm. Its function is as follows. May play a role in the regulation of cytokinesis. This Debaryomyces hansenii (strain ATCC 36239 / CBS 767 / BCRC 21394 / JCM 1990 / NBRC 0083 / IGC 2968) (Yeast) protein is Ataxin-10 homolog (CTR86).